The primary structure comprises 701 residues: Serologically defined colon cancer antigen 8 homolog (701 aa).

Over residues 1 to 13 (MKPSLESDEEEEL) the composition is skewed to acidic residues. Disordered regions lie at residues 1–67 (MKPS…VQQS) and 84–114 (ANIQ…GVHN). Positions 45-67 (SEPNQQELLSSVQQNPCSPVQQS) are enriched in polar residues. 3 coiled-coil regions span residues 119–173 (INNQ…LKEY), 203–258 (HKWR…AVAA), and 323–695 (QQVK…AGKR). The disordered stretch occupies residues 364–387 (LASEQDKISQAREAARSESKKERE).

The protein localises to the cytoplasm. The protein resides in the cytoskeleton. It is found in the microtubule organizing center. It localises to the centrosome. Its subcellular location is the centriole. The protein localises to the cilium basal body. The protein resides in the cell junction. Its function is as follows. Plays a role in the establishment of cell polarity and epithelial lumen formation. Also plays an essential role in ciliogenesis and subsequent Hedgehog signaling pathway that requires the presence of intact primary cilia for pathway activation. Mechanistically, interacts with and mediates RABEP2 centrosomal localization which is critical for ciliogenesis. The protein is Serologically defined colon cancer antigen 8 homolog (Sdccag8) of Danio rerio (Zebrafish).